The primary structure comprises 247 residues: tRNA1(Val) (adenine(37)-N6)-methyltransferase (247 aa).

Belongs to the methyltransferase superfamily. tRNA (adenine-N(6)-)-methyltransferase family.

It is found in the cytoplasm. It carries out the reaction adenosine(37) in tRNA1(Val) + S-adenosyl-L-methionine = N(6)-methyladenosine(37) in tRNA1(Val) + S-adenosyl-L-homocysteine + H(+). In terms of biological role, specifically methylates the adenine in position 37 of tRNA(1)(Val) (anticodon cmo5UAC). The protein is tRNA1(Val) (adenine(37)-N6)-methyltransferase of Edwardsiella ictaluri (strain 93-146).